The chain runs to 1151 residues: ATP-dependent helicase/deoxyribonuclease subunit B (1151 aa).

In terms of domain architecture, UvrD-like helicase ATP-binding spans 1–273 (MALRLVLGRA…LALAAGVRVE (273 aa)). 8 to 15 (GRAGSGKT) provides a ligand contact to ATP. In terms of domain architecture, UvrD-like helicase C-terminal spans 282–578 (PPRFREAPAL…KLRLIPPALD (297 aa)). Residues Cys788, Cys1107, Cys1110, and Cys1116 each contribute to the [4Fe-4S] cluster site.

The protein belongs to the helicase family. AddB/RexB type 1 subfamily. In terms of assembly, heterodimer of AddA and AddB. Requires Mg(2+) as cofactor. [4Fe-4S] cluster serves as cofactor.

In terms of biological role, the heterodimer acts as both an ATP-dependent DNA helicase and an ATP-dependent, dual-direction single-stranded exonuclease. Recognizes the chi site generating a DNA molecule suitable for the initiation of homologous recombination. The AddB subunit has 5' -&gt; 3' nuclease activity but not helicase activity. In Moorella thermoacetica (strain ATCC 39073 / JCM 9320), this protein is ATP-dependent helicase/deoxyribonuclease subunit B.